The primary structure comprises 269 residues: Embryonic polyadenylate-binding protein 2 (269 aa).

Positions 26-54 are disordered; sequence EAQGWGAWGRTEKTSLVPSAGSDKEAEEN. Residues 139 to 216 form the RRM domain; the sequence is RSVYVGNVDY…RVIKVLPKRT (78 aa). A disordered region spans residues 240-269; sequence LQGSLQRKPRLRPHGQSRGRGRASPWFSPY. Residues 246–260 are compositionally biased toward basic residues; the sequence is RKPRLRPHGQSRGRG.

The protein localises to the cytoplasm. Its function is as follows. Binds the poly(A) tail of mRNA. This Rattus norvegicus (Rat) protein is Embryonic polyadenylate-binding protein 2 (Pabpn1l).